A 343-amino-acid chain; its full sequence is L-threonine 3-dehydrogenase (343 aa).

A Zn(2+)-binding site is contributed by Cys38. Active-site charge relay system residues include Thr40 and His43. Positions 63, 64, 93, 96, 99, and 107 each coordinate Zn(2+). NAD(+)-binding positions include Ile175, Asp195, Arg200, 262-264 (LGI), and 286-287 (IY).

Belongs to the zinc-containing alcohol dehydrogenase family. As to quaternary structure, homotetramer. The cofactor is Zn(2+).

It is found in the cytoplasm. It catalyses the reaction L-threonine + NAD(+) = (2S)-2-amino-3-oxobutanoate + NADH + H(+). Its pathway is amino-acid degradation; L-threonine degradation via oxydo-reductase pathway; glycine from L-threonine: step 1/2. Functionally, catalyzes the NAD(+)-dependent oxidation of L-threonine to 2-amino-3-ketobutyrate. This is L-threonine 3-dehydrogenase from Pectobacterium carotovorum subsp. carotovorum (strain PC1).